We begin with the raw amino-acid sequence, 386 residues long: tRNA N6-adenosine threonylcarbamoyltransferase (386 aa).

A divalent metal cation is bound by residues H141, H145, and Y162. Substrate-binding positions include 162–166, D194, G209, E213, and N315; that span reads YVSGG. D344 is an a divalent metal cation binding site.

The protein belongs to the KAE1 / TsaD family. Component of the EKC/KEOPS complex composed of at least BUD32, CGI121, GON7, KAE1 and PCC1; the whole complex dimerizes. It depends on a divalent metal cation as a cofactor.

The protein resides in the cytoplasm. It is found in the nucleus. The catalysed reaction is L-threonylcarbamoyladenylate + adenosine(37) in tRNA = N(6)-L-threonylcarbamoyladenosine(37) in tRNA + AMP + H(+). Functionally, component of the EKC/KEOPS complex that is required for the formation of a threonylcarbamoyl group on adenosine at position 37 (t(6)A37) in tRNAs that read codons beginning with adenine. The complex is probably involved in the transfer of the threonylcarbamoyl moiety of threonylcarbamoyl-AMP (TC-AMP) to the N6 group of A37. KAE1 likely plays a direct catalytic role in this reaction, but requires other protein(s) of the complex to fulfill this activity. The EKC/KEOPS complex also promotes both telomere uncapping and telomere elongation. The complex is required for efficient recruitment of transcriptional coactivators. The protein is tRNA N6-adenosine threonylcarbamoyltransferase of Saccharomyces cerevisiae (strain ATCC 204508 / S288c) (Baker's yeast).